We begin with the raw amino-acid sequence, 114 residues long: MNMRAERVGEQMKQEIMDIANNKVKDPRIGFLTITDVQLTNDLSIATVYLTVLGNEKQKADTFKGLEKAKGFIKSELGSRMRLRIIPELNFEYDESIDYGNKIERMIQDLHKKD.

This sequence belongs to the RbfA family. In terms of assembly, monomer. Binds 30S ribosomal subunits, but not 50S ribosomal subunits or 70S ribosomes.

It is found in the cytoplasm. In terms of biological role, one of several proteins that assist in the late maturation steps of the functional core of the 30S ribosomal subunit. Associates with free 30S ribosomal subunits (but not with 30S subunits that are part of 70S ribosomes or polysomes). Required for efficient processing of 16S rRNA. May interact with the 5'-terminal helix region of 16S rRNA. The protein is Ribosome-binding factor A of Staphylococcus saprophyticus subsp. saprophyticus (strain ATCC 15305 / DSM 20229 / NCIMB 8711 / NCTC 7292 / S-41).